A 222-amino-acid chain; its full sequence is GTP cyclohydrolase 1 (222 aa).

Zn(2+) contacts are provided by Cys-111, His-114, and Cys-182.

It belongs to the GTP cyclohydrolase I family. As to quaternary structure, toroid-shaped homodecamer, composed of two pentamers of five dimers.

It catalyses the reaction GTP + H2O = 7,8-dihydroneopterin 3'-triphosphate + formate + H(+). The protein operates within cofactor biosynthesis; 7,8-dihydroneopterin triphosphate biosynthesis; 7,8-dihydroneopterin triphosphate from GTP: step 1/1. The protein is GTP cyclohydrolase 1 of Enterobacter sp. (strain 638).